Here is a 191-residue protein sequence, read N- to C-terminus: Potassium-transporting ATPase KdpC subunit (191 aa).

A helical membrane pass occupies residues 11-31; the sequence is LFVLLTAVTGVVYPLAVTGIA.

This sequence belongs to the KdpC family. As to quaternary structure, the system is composed of three essential subunits: KdpA, KdpB and KdpC.

It localises to the cell inner membrane. In terms of biological role, part of the high-affinity ATP-driven potassium transport (or Kdp) system, which catalyzes the hydrolysis of ATP coupled with the electrogenic transport of potassium into the cytoplasm. This subunit acts as a catalytic chaperone that increases the ATP-binding affinity of the ATP-hydrolyzing subunit KdpB by the formation of a transient KdpB/KdpC/ATP ternary complex. This is Potassium-transporting ATPase KdpC subunit from Dechloromonas aromatica (strain RCB).